The following is a 617-amino-acid chain: Secretogranin-2 (617 aa).

The signal sequence occupies residues methionine 1 to phenylalanine 30. At tyrosine 153 the chain carries Sulfotyrosine. Phosphoserine occurs at positions 176 and 270. 2 stretches are compositionally biased toward basic and acidic residues: residues threonine 261–arginine 286 and glutamate 295–glutamate 307. Residues threonine 261–glutamate 307 are disordered. 4 positions are modified to phosphoserine: serine 434, serine 532, serine 555, and serine 556.

This sequence belongs to the chromogranin/secretogranin protein family. Interacts with Secretogranin III/SCG3.

The protein localises to the secreted. Functionally, neuroendocrine protein of the granin family that regulates the biogenesis of secretory granules. The chain is Secretogranin-2 (Scg2) from Mus musculus (Mouse).